The chain runs to 392 residues: Speckle-type POZ protein-like B (392 aa).

The 131-residue stretch at 31-161 (KFSYMWTINN…DDKLTLFCEV (131 aa)) folds into the MATH domain. Residues 200-267 (TDCSLFVGGQ…IYTGKAPNLE (68 aa)) form the BTB domain.

Belongs to the Tdpoz family. In terms of assembly, homodimer. Heterodimer with SPOP. Component of cullin-RING-based BCR (BTB-CUL3-RBX1) E3 ubiquitin-protein ligase complexes containing homodimeric SPOPL or the heterodimer formed by SPOP and SPOPL.

The protein resides in the nucleus. Its pathway is protein modification; protein ubiquitination. Functionally, component of a cullin-RING-based BCR (BTB-CUL3-RBX1) E3 ubiquitin-protein ligase complex that mediates the ubiquitination and subsequent proteasomal degradation of target proteins, but with relatively low efficiency. The polypeptide is Speckle-type POZ protein-like B (spoplb) (Danio rerio (Zebrafish)).